Here is a 195-residue protein sequence, read N- to C-terminus: Peptidyl-tRNA hydrolase (195 aa).

Residue tyrosine 17 participates in tRNA binding. Residue histidine 22 is the Proton acceptor of the active site. Positions 68, 70, and 116 each coordinate tRNA.

It belongs to the PTH family. In terms of assembly, monomer.

The protein localises to the cytoplasm. The enzyme catalyses an N-acyl-L-alpha-aminoacyl-tRNA + H2O = an N-acyl-L-amino acid + a tRNA + H(+). Its function is as follows. Hydrolyzes ribosome-free peptidyl-tRNAs (with 1 or more amino acids incorporated), which drop off the ribosome during protein synthesis, or as a result of ribosome stalling. Functionally, catalyzes the release of premature peptidyl moieties from peptidyl-tRNA molecules trapped in stalled 50S ribosomal subunits, and thus maintains levels of free tRNAs and 50S ribosomes. The protein is Peptidyl-tRNA hydrolase of Shewanella sp. (strain ANA-3).